We begin with the raw amino-acid sequence, 347 residues long: MEDNRKKALGAALSQIERQFGKGAVMKMGDQPREAIPAVSTGSLGLDVALGIGGLPYGRIVEIYGPESSGKTTLTLQVIAEAQKQGKTCAFVDAEHALDPVYAEKLGVNVDELLVSQPDTGEQALEIADMLVRSNAVDVIIVDSVAALTPKAEIEGEMGDSHVGLQARLMSQALRKLTGNVKHANCLMVFINQIRMKIGVMFGSPETTTGGNALKFYSSVRLDIRRIGSVKDGDEVVGNETRVKVVKNKVSPPFRQAEFQIMYGKGIYHMAEVLDMGVKEGFVDKSGAWYAYNGDKIGQGKANACKFLEENLDIANEIEAKVRDKLMPKPVKKETAEAPAEANGELL.

Residue 65 to 72 (GPESSGKT) participates in ATP binding.

Belongs to the RecA family.

Its subcellular location is the cytoplasm. Its function is as follows. Can catalyze the hydrolysis of ATP in the presence of single-stranded DNA, the ATP-dependent uptake of single-stranded DNA by duplex DNA, and the ATP-dependent hybridization of homologous single-stranded DNAs. It interacts with LexA causing its activation and leading to its autocatalytic cleavage. The protein is Protein RecA of Marinobacter nauticus (strain ATCC 700491 / DSM 11845 / VT8) (Marinobacter aquaeolei).